Reading from the N-terminus, the 416-residue chain is Serine--tRNA ligase (416 aa).

232-234 (TAE) contacts L-serine. 263–265 (RKE) contributes to the ATP binding site. Residue Glu-286 coordinates L-serine. 350-353 (EISS) serves as a coordination point for ATP. Ser-384 contributes to the L-serine binding site.

It belongs to the class-II aminoacyl-tRNA synthetase family. Type-1 seryl-tRNA synthetase subfamily. In terms of assembly, homodimer. The tRNA molecule binds across the dimer.

It localises to the cytoplasm. The catalysed reaction is tRNA(Ser) + L-serine + ATP = L-seryl-tRNA(Ser) + AMP + diphosphate + H(+). It catalyses the reaction tRNA(Sec) + L-serine + ATP = L-seryl-tRNA(Sec) + AMP + diphosphate + H(+). It participates in aminoacyl-tRNA biosynthesis; selenocysteinyl-tRNA(Sec) biosynthesis; L-seryl-tRNA(Sec) from L-serine and tRNA(Sec): step 1/1. Its function is as follows. Catalyzes the attachment of serine to tRNA(Ser). Is also able to aminoacylate tRNA(Sec) with serine, to form the misacylated tRNA L-seryl-tRNA(Sec), which will be further converted into selenocysteinyl-tRNA(Sec). This is Serine--tRNA ligase from Nautilia profundicola (strain ATCC BAA-1463 / DSM 18972 / AmH).